We begin with the raw amino-acid sequence, 451 residues long: UDP-N-acetylmuramate--L-alanine ligase (451 aa).

110–116 (GTHGKTT) lines the ATP pocket.

This sequence belongs to the MurCDEF family.

It is found in the cytoplasm. The enzyme catalyses UDP-N-acetyl-alpha-D-muramate + L-alanine + ATP = UDP-N-acetyl-alpha-D-muramoyl-L-alanine + ADP + phosphate + H(+). It participates in cell wall biogenesis; peptidoglycan biosynthesis. Its function is as follows. Cell wall formation. In Francisella tularensis subsp. mediasiatica (strain FSC147), this protein is UDP-N-acetylmuramate--L-alanine ligase.